Consider the following 215-residue polypeptide: Adenylate kinase (215 aa).

An ATP-binding site is contributed by 10 to 15; that stretch reads GAGKGT. An NMP region spans residues 30-59; that stretch reads STGDMLRAAVKAETELGLKAKSVMDSGGLV. AMP-binding positions include T31, R36, 57-59, 85-88, and Q92; these read GLV and GFPR. The segment at 122–159 is LID; it reads GRRVHEGSGRIYHTIFNPPKVEGIDDVTGEPLLQRKDD. ATP-binding positions include R123 and 132–133; that span reads IY. AMP is bound by residues R156 and R167. Residue G201 participates in ATP binding.

It belongs to the adenylate kinase family. As to quaternary structure, monomer.

Its subcellular location is the cytoplasm. The enzyme catalyses AMP + ATP = 2 ADP. Its pathway is purine metabolism; AMP biosynthesis via salvage pathway; AMP from ADP: step 1/1. Functionally, catalyzes the reversible transfer of the terminal phosphate group between ATP and AMP. Plays an important role in cellular energy homeostasis and in adenine nucleotide metabolism. The chain is Adenylate kinase from Pseudomonas syringae pv. syringae (strain B728a).